A 255-amino-acid chain; its full sequence is Acetyl-coenzyme A carboxylase carboxyl transferase subunit alpha (255 aa).

The CoA carboxyltransferase C-terminal domain occupies 1–235 (MNIAKIVREA…KKELQTELAR (235 aa)).

This sequence belongs to the AccA family. As to quaternary structure, acetyl-CoA carboxylase is a heterohexamer composed of biotin carboxyl carrier protein (AccB), biotin carboxylase (AccC) and two subunits each of ACCase subunit alpha (AccA) and ACCase subunit beta (AccD).

The protein localises to the cytoplasm. The enzyme catalyses N(6)-carboxybiotinyl-L-lysyl-[protein] + acetyl-CoA = N(6)-biotinyl-L-lysyl-[protein] + malonyl-CoA. It functions in the pathway lipid metabolism; malonyl-CoA biosynthesis; malonyl-CoA from acetyl-CoA: step 1/1. Component of the acetyl coenzyme A carboxylase (ACC) complex. First, biotin carboxylase catalyzes the carboxylation of biotin on its carrier protein (BCCP) and then the CO(2) group is transferred by the carboxyltransferase to acetyl-CoA to form malonyl-CoA. In Streptococcus pneumoniae (strain CGSP14), this protein is Acetyl-coenzyme A carboxylase carboxyl transferase subunit alpha.